We begin with the raw amino-acid sequence, 237 residues long: Bax inhibitor 1 (237 aa).

Residues Met1–Lys29 are Cytoplasmic-facing. Lys7 participates in a covalent cross-link: Glycyl lysine isopeptide (Lys-Gly) (interchain with G-Cter in ubiquitin). A helical membrane pass occupies residues Val30–Val50. The Lumenal portion of the chain corresponds to Thr51 to Arg52. Residues Phe53–Ala73 form a helical membrane-spanning segment. The Cytoplasmic segment spans residues Thr74–Gly86. A helical membrane pass occupies residues Leu87–Ile107. Residues Ala108 to Ser112 lie on the Lumenal side of the membrane. A helical transmembrane segment spans residues Ile113 to Leu133. Topologically, residues Tyr134–Ser139 are cytoplasmic. The helical transmembrane segment at Tyr140–Gly160 threads the bilayer. Residues Asn161–Ser166 lie on the Lumenal side of the membrane. Residues Ile167–Phe187 traverse the membrane as a helical segment. Residues Asp188–His206 lie on the Cytoplasmic side of the membrane. Positions Cys207–Phe227 form an intramembrane region, helical. The Cytoplasmic segment spans residues Asn228–Lys237.

Belongs to the BI1 family. As to quaternary structure, interacts with BCL2 and BCL2L1. Interacts with ERN1. Ubiquitinated by BFAR, leading to proteasomal degradation. Highly abundant in adult testis.

The protein localises to the endoplasmic reticulum membrane. In terms of biological role, endoplasmic reticulum (ER)-resident protein that confers cellular protection as an anti-apoptotic protein by limiting multiple stress-inducing pathways surrounding the endoplasmic reticulum and mitochondria. Inhibits the activities of the key sensor for the endoplasmic reticulum unfolded protein response IRE1alpha/ERN1 both directly and by blocking BAX/BAK binding. Modulates ER calcium homeostasis by acting as a calcium-leak channel. Negatively regulates autophagy and autophagosome formation, especially during periods of nutrient deprivation, and reduces cell survival during starvation. In Rattus norvegicus (Rat), this protein is Bax inhibitor 1 (Tmbim6).